Here is a 198-residue protein sequence, read N- to C-terminus: Ribonuclease HII (198 aa).

One can recognise an RNase H type-2 domain in the interval 10 to 198 (HLVAGVDEVG…PVRRALGIAS (189 aa)). Positions 16, 17, and 108 each coordinate a divalent metal cation.

It belongs to the RNase HII family. Requires Mn(2+) as cofactor. It depends on Mg(2+) as a cofactor.

The protein localises to the cytoplasm. It carries out the reaction Endonucleolytic cleavage to 5'-phosphomonoester.. In terms of biological role, endonuclease that specifically degrades the RNA of RNA-DNA hybrids. The chain is Ribonuclease HII from Cronobacter sakazakii (strain ATCC BAA-894) (Enterobacter sakazakii).